The chain runs to 941 residues: MQHKTIMDKIIIQGARENNLKNIFLEIPKNQFVVFTGLSGSGKSTLAFDTLYAEGQRRYLESLSSYARQFLDKVGKPNVDKIEGLTPAIAIDQKTTSKNPRSTVGTITEIYDYLRLLFARVGEQFCPTCLEPISSMSASDIISQICHLEENSKIIILAPIIKDKKGSFNDKLESLRLKGYVRAFVDGVMVRLDEEIHLHKTKKHTIEAVVDRVVINSENASRIASAVEKALKESYGELEVEILQDNAPSIRKHYSEHKACFKCKMSFEELEPLSFSFNSPKGACESCLGLGTKFSLDISKILDPNTPLNQGAIKVIFGYNRSYYAQMFEGFCTYNGIDSALCFNELNKEQQDALLYGNGTEISFHFKNSPLKRPWKGIIQIAYDMFKEQKDLSDYMSEKTCSSCNGHRLKASSLSVQVAGLKMADFLTKPIEEVYHFFNDPTHFNYLNEQEKKIAEPILKEILERVFFLYDVGLGYLTLGRDARTISGGESQRIRIASQIGSGLTGVLYVLDEPSIGLHEKDTLKLINTLRNLQKKGNTLIVVEHDKETIKHADFVVDIGPKAGRHGGEVVFSGSVKDLLQNNHSTALYLNGTKKIERPKFEPPKEKHFLEIKNVNINNIKNLSVQIPLKQLVCITGVSGSGKSSLILQTLLPTAQTLLNHAKKNQSLNGVEIVGLEYLDKVIYLDQAPIGKTPRSNPATYTGVMDEIRILFAEQKEAKILGYSTSRFSFNVKGGRCEKCQGDGDIKIEMHFLPDVLVQCDSCKGAKYNPQTLEIKVKGKSIADVLNMSVEEAYEFFAKFPKIAVKLKTLIDVGLGYITLGQNATTLSGGEAQRIKLAKELSKKDTGKTLYILDEPTTGLHFEDVNHLLQVLHSLVALGNSMLVIEHNLDIIKNADYIIDMGPDGGDKGGKVIASGTPLEVAQNCEKTQSYTGKFLALELK.

37–44 (GLSGSGKS) serves as a coordination point for ATP. A C4-type zinc finger spans residues 260 to 287 (CFKCKMSFEELEPLSFSFNSPKGACESC). ABC transporter domains follow at residues 316 to 585 (IFGY…NNHS) and 605 to 937 (KEKH…KFLA). Position 637-644 (637-644 (GVSGSGKS)) interacts with ATP. Residues 737-763 (CEKCQGDGDIKIEMHFLPDVLVQCDSC) form a C4-type zinc finger.

It belongs to the ABC transporter superfamily. UvrA family. Forms a heterotetramer with UvrB during the search for lesions.

It localises to the cytoplasm. In terms of biological role, the UvrABC repair system catalyzes the recognition and processing of DNA lesions. UvrA is an ATPase and a DNA-binding protein. A damage recognition complex composed of 2 UvrA and 2 UvrB subunits scans DNA for abnormalities. When the presence of a lesion has been verified by UvrB, the UvrA molecules dissociate. The protein is UvrABC system protein A of Helicobacter pylori (strain J99 / ATCC 700824) (Campylobacter pylori J99).